The primary structure comprises 160 residues: Type IV major fimbrial protein FimA (160 aa).

The propeptide at 1 to 7 (MKSLQKG) is leader sequence. Phe8 is subject to N-methylphenylalanine. The chain crosses the membrane as a helical span at residues 8-28 (FTLIELMIVVAIIGILAAFAI). The cysteines at positions 63 and 105 are disulfide-linked.

This sequence belongs to the N-Me-Phe pilin family. As to quaternary structure, the pili are polar flexible filaments of about 5.4 nanometers diameter and 2.5 micrometers average length; they consist of only a single polypeptide chain arranged in a helical configuration of five subunits per turn in the assembled pilus.

It is found in the fimbrium. Its subcellular location is the membrane. In terms of biological role, major component of the type IV fimbriae that plays an essential role in twitching motility, natural transformation, and protease secretion. The sequence is that of Type IV major fimbrial protein FimA (fimA) from Dichelobacter nodosus (Bacteroides nodosus).